Reading from the N-terminus, the 251-residue chain is Large ribosomal subunit protein uL4 (251 aa).

It belongs to the universal ribosomal protein uL4 family. As to quaternary structure, part of the 50S ribosomal subunit.

Functionally, one of the primary rRNA binding proteins, this protein initially binds near the 5'-end of the 23S rRNA. It is important during the early stages of 50S assembly. It makes multiple contacts with different domains of the 23S rRNA in the assembled 50S subunit and ribosome. Forms part of the polypeptide exit tunnel. This is Large ribosomal subunit protein uL4 from Methanothrix thermoacetophila (strain DSM 6194 / JCM 14653 / NBRC 101360 / PT) (Methanosaeta thermophila).